The primary structure comprises 195 residues: HTH-type transcriptional regulator BetI (195 aa).

Residues 8-68 (EIRRAQLIDA…ATMRHVLRDL (61 aa)) enclose the HTH tetR-type domain. The segment at residues 31-50 (TLASVAQRASISTGIVSHYF) is a DNA-binding region (H-T-H motif).

It functions in the pathway amine and polyamine biosynthesis; betaine biosynthesis via choline pathway [regulation]. Functionally, repressor involved in the biosynthesis of the osmoprotectant glycine betaine. It represses transcription of the choline transporter BetT and the genes of BetAB involved in the synthesis of glycine betaine. The sequence is that of HTH-type transcriptional regulator BetI from Paraburkholderia phytofirmans (strain DSM 17436 / LMG 22146 / PsJN) (Burkholderia phytofirmans).